Here is a 414-residue protein sequence, read N- to C-terminus: Gamma-glutamyl phosphate reductase (414 aa).

This sequence belongs to the gamma-glutamyl phosphate reductase family.

The protein localises to the cytoplasm. It catalyses the reaction L-glutamate 5-semialdehyde + phosphate + NADP(+) = L-glutamyl 5-phosphate + NADPH + H(+). It participates in amino-acid biosynthesis; L-proline biosynthesis; L-glutamate 5-semialdehyde from L-glutamate: step 2/2. Its function is as follows. Catalyzes the NADPH-dependent reduction of L-glutamate 5-phosphate into L-glutamate 5-semialdehyde and phosphate. The product spontaneously undergoes cyclization to form 1-pyrroline-5-carboxylate. The protein is Gamma-glutamyl phosphate reductase of Clostridium botulinum (strain Eklund 17B / Type B).